The sequence spans 557 residues: Leucine-rich glioma-inactivated protein 1 (557 aa).

An N-terminal signal peptide occupies residues 1–34 (MESERSKRMGNACIPLKRIAYFLCLLSALLLTEG). The region spanning 35-72 (KKPAKPKCPAVCTCTKDNALCENARSIPRTVPPDVISL) is the LRRNT domain. 3 LRR repeats span residues 92 to 113 (SLQLLLFTSNSFDVISDDAFIG), 116 to 137 (HLEYLFIENNNIKSISRHTFRG), and 140 to 161 (SLIHLSLANNNLQTLPKDIFKG). The LRRCT domain occupies 173 to 223 (NSFNCDCKLKWLVEWLGHTNATVEDIYCEGPPEYKKRKINSLSSKDFDCII). The N-linked (GlcNAc...) asparagine glycan is linked to Asn-192. EAR repeat units lie at residues 225–267 (EFAK…EWDH), 271–313 (TFRN…KRDS), 317–364 (KFIK…KWNG), 366–415 (GFYS…QWNK), 419–462 (SFTN…KWGG), 464–506 (SFQD…NWDA), and 510–552 (KFVK…KHVI). N-linked (GlcNAc...) asparagine glycosylation is present at Asn-277. Residue Asn-422 is glycosylated (N-linked (GlcNAc...) asparagine).

Oligomer. Interacts with KCNA1 within a complex containing KCNA1, KCNA4 and KCNAB1. Part of a complex containing ADAM22, DLG4/PSD95 and CACNG2 (stargazin). Can bind to ADAM11 and ADAM23. In terms of processing, glycosylated.

Its subcellular location is the secreted. It is found in the synapse. The protein localises to the cytoplasm. In terms of biological role, regulates voltage-gated potassium channels assembled from KCNA1, KCNA4 and KCNAB1. It slows down channel inactivation by precluding channel closure mediated by the KCNAB1 subunit. Ligand for ADAM22 that positively regulates synaptic transmission mediated by AMPA-type glutamate receptors. Plays a role in suppressing the production of MMP1/3 through the phosphatidylinositol 3-kinase/ERK pathway. In Pan troglodytes (Chimpanzee), this protein is Leucine-rich glioma-inactivated protein 1 (LGI1).